A 309-amino-acid chain; its full sequence is Homoserine kinase (309 aa).

Residue 91 to 101 (PIGSGLGSSAC) participates in ATP binding.

This sequence belongs to the GHMP kinase family. Homoserine kinase subfamily.

The protein localises to the cytoplasm. The catalysed reaction is L-homoserine + ATP = O-phospho-L-homoserine + ADP + H(+). It functions in the pathway amino-acid biosynthesis; L-threonine biosynthesis; L-threonine from L-aspartate: step 4/5. In terms of biological role, catalyzes the ATP-dependent phosphorylation of L-homoserine to L-homoserine phosphate. The chain is Homoserine kinase from Erwinia tasmaniensis (strain DSM 17950 / CFBP 7177 / CIP 109463 / NCPPB 4357 / Et1/99).